The chain runs to 452 residues: Peptidase M20 domain-containing protein SMAC_03666.2 (452 aa).

The first 28 residues, 1–28 (MKATSNLLLLWGTSLLSPSSAFVIDNHH), serve as a signal peptide directing secretion. The N-linked (GlcNAc...) asparagine glycan is linked to N140. D186 is a Zn(2+) binding site. E220 serves as the catalytic Proton acceptor. Zn(2+) is bound at residue E221. An N-linked (GlcNAc...) asparagine glycan is attached at N315.

This sequence belongs to the peptidase M20A family. Zn(2+) is required as a cofactor.

The protein resides in the secreted. This Sordaria macrospora (strain ATCC MYA-333 / DSM 997 / K(L3346) / K-hell) protein is Peptidase M20 domain-containing protein SMAC_03666.2.